Consider the following 819-residue polypeptide: Protein SCARECROW (819 aa).

Disordered regions lie at residues 6-49 (LFNG…HSER), 65-136 (HNNN…INNN), 212-231 (SQNN…RNNT), and 393-420 (PLST…TTTT). The span at 15–33 (TTPDETNNNSTSNSSNIST) shows a compositional bias: low complexity. Polar residues predominate over residues 79-98 (RTNNTSSLNCSLPATTQKGV). Positions 99–136 (TTTTTTTLASSGNNNNNNNNNNNYHYHNNNNNSIINNN) are enriched in low complexity. A coiled-coil region spans residues 418–448 (TTTSAELALARKKKEEIKEQKKKDEEGLHLL). In terms of domain architecture, GRAS spans 438 to 806 (KKKDEEGLHL…LCLLTASAWR (369 aa)). A leucine repeat I (LRI) region spans residues 445 to 507 (LHLLTLLLQC…RLVSSCLGIY (63 aa)). The LxCxE motif motif lies at 452-456 (LQCAE). The interval 526–591 (FQVFNGISPF…GGPPYVRLTG (66 aa)) is VHIID. The VHIID motif lies at 557–561 (VHIID). The tract at residues 601–633 (ATGKRLSDFANKLGLPFEFFPVAEKVGNIDVEK) is leucine repeat II (LRII). The PFYRE stretch occupies residues 642–729 (VAVHWLQHSL…QQLLSREIRN (88 aa)). An SAW region spans residues 732 to 806 (AVGGPSRSGE…LCLLTASAWR (75 aa)).

Belongs to the GRAS family. Expressed in shoot apical meristem, leaf primordia, between the cortex and the differentiating vessels in lower shoots and in root endodermis.

It is found in the nucleus. Its function is as follows. Putative transcription factor involved in asymmetric cell division. The chain is Protein SCARECROW (SCR) from Pisum sativum (Garden pea).